The chain runs to 254 residues: Triosephosphate isomerase, cytosolic (254 aa).

The substrate site is built by asparagine 10 and lysine 12. The active-site Electrophile is histidine 96. Glutamate 166 (proton acceptor) is an active-site residue.

Belongs to the triosephosphate isomerase family. In terms of assembly, homodimer.

It localises to the cytoplasm. It catalyses the reaction D-glyceraldehyde 3-phosphate = dihydroxyacetone phosphate. The protein operates within carbohydrate biosynthesis; gluconeogenesis. It participates in carbohydrate degradation; glycolysis; D-glyceraldehyde 3-phosphate from glycerone phosphate: step 1/1. In Petunia hybrida (Petunia), this protein is Triosephosphate isomerase, cytosolic (TPIP1).